The following is a 671-amino-acid chain: NADH-quinone oxidoreductase subunit G (671 aa).

A 2Fe-2S ferredoxin-type domain is found at 1-78 (MIKLNVDGSE…GMVIHTDTPM (78 aa)). Residues Cys-34, Cys-45, Cys-48, and Cys-62 each coordinate [2Fe-2S] cluster. Residues 78–117 (MVKKAREGVMEFLLINHPLDCPICDQGGECNLQDQAFRYG) form the 4Fe-4S His(Cys)3-ligated-type domain. 8 residues coordinate [4Fe-4S] cluster: His-94, Cys-98, Cys-101, Cys-107, Cys-146, Cys-149, Cys-152, and Cys-196. One can recognise a 4Fe-4S Mo/W bis-MGD-type domain in the interval 215 to 271 (LKHTASIGVHDAEGSNIRIDSRGDEVMRILPRVNEEINEEWLSDKNRFSYDGLKYQR).

This sequence belongs to the complex I 75 kDa subunit family. It depends on [2Fe-2S] cluster as a cofactor. The cofactor is [4Fe-4S] cluster.

The enzyme catalyses a quinone + NADH + 5 H(+)(in) = a quinol + NAD(+) + 4 H(+)(out). NDH-1 shuttles electrons from NADH, via FMN and iron-sulfur (Fe-S) centers, to quinones in the respiratory chain. Couples the redox reaction to proton translocation (for every two electrons transferred, four hydrogen ions are translocated across the cytoplasmic membrane), and thus conserves the redox energy in a proton gradient. The protein is NADH-quinone oxidoreductase subunit G (nuoG) of Rickettsia conorii (strain ATCC VR-613 / Malish 7).